Here is a 130-residue protein sequence, read N- to C-terminus: Small ribosomal subunit protein uS11c (130 aa).

It belongs to the universal ribosomal protein uS11 family. Part of the 30S ribosomal subunit.

The protein localises to the plastid. The protein resides in the chloroplast. The chain is Small ribosomal subunit protein uS11c from Cycas taitungensis (Prince sago).